The sequence spans 383 residues: Transcription termination factor Rho (383 aa).

Residues 1 to 22 form a disordered region; it reads MTIETTTKKRPRAARPPRPRES. Residues 8–17 are compositionally biased toward basic residues; that stretch reads KKRPRAARPP. One can recognise a Rho RNA-BD domain in the interval 26-93; sequence LETVAGLLDV…AEVESVNGST (68 aa). ATP-binding positions include 132–137, 144–149, and arginine 175; these read GKGQRG and KAGKTM.

It belongs to the Rho family. In terms of assembly, homohexamer. The homohexamer assembles into an open ring structure.

Functionally, facilitates transcription termination by a mechanism that involves Rho binding to the nascent RNA, activation of Rho's RNA-dependent ATPase activity, and release of the mRNA from the DNA template. This Streptosporangium roseum (strain ATCC 12428 / DSM 43021 / JCM 3005 / KCTC 9067 / NCIMB 10171 / NRRL 2505 / NI 9100) protein is Transcription termination factor Rho.